Here is a 471-residue protein sequence, read N- to C-terminus: Glutamine synthetase (471 aa).

The GS beta-grasp domain occupies 14–99 (QKIQMIDLKF…ICSIKEPRTG (86 aa)). Positions 106–471 (PRVIAQKAID…PYEFYLYYDC (366 aa)) constitute a GS catalytic domain. Residues Glu131 and Glu133 each contribute to the Mg(2+) site. Glu208 is a binding site for ATP. Mg(2+) contacts are provided by Glu213 and Glu221. L-glutamate contacts are provided by residues 265-266 (NG) and Gly266. Residue His270 coordinates Mg(2+). ATP contacts are provided by residues 272–274 (HQS) and Ser274. L-glutamate contacts are provided by Arg322, Glu328, and Arg340. Positions 340, 345, and 354 each coordinate ATP. Residue Glu359 coordinates Mg(2+). An L-glutamate-binding site is contributed by Arg361. Tyr399 carries the post-translational modification O-AMP-tyrosine.

The protein belongs to the glutamine synthetase family. As to quaternary structure, oligomer of 12 subunits arranged in the form of two hexagons. The cofactor is Mg(2+).

The protein localises to the cytoplasm. The catalysed reaction is L-glutamate + NH4(+) + ATP = L-glutamine + ADP + phosphate + H(+). With respect to regulation, the activity of this enzyme could be controlled by adenylation under conditions of abundant glutamine. In terms of biological role, involved in nitrogen metabolism via ammonium assimilation. Catalyzes the ATP-dependent biosynthesis of glutamine from glutamate and ammonia. The sequence is that of Glutamine synthetase from Microchaete diplosiphon (Fremyella diplosiphon).